The chain runs to 98 residues: DNA-binding protein Fis (98 aa).

Positions 74-93 (QTRAAVMMGINRGTLRKKLK) form a DNA-binding region, H-T-H motif.

The protein belongs to the transcriptional regulatory Fis family. In terms of assembly, homodimer.

Activates ribosomal RNA transcription. Plays a direct role in upstream activation of rRNA promoters. The polypeptide is DNA-binding protein Fis (Aeromonas hydrophila subsp. hydrophila (strain ATCC 7966 / DSM 30187 / BCRC 13018 / CCUG 14551 / JCM 1027 / KCTC 2358 / NCIMB 9240 / NCTC 8049)).